A 43-amino-acid chain; its full sequence is uncharacterized protein (43 aa).

This is an uncharacterized protein from Escherichia coli (Bacteriophage T3).